The chain runs to 571 residues: Proline--tRNA ligase (571 aa).

It belongs to the class-II aminoacyl-tRNA synthetase family. ProS type 1 subfamily. As to quaternary structure, homodimer.

It is found in the cytoplasm. The enzyme catalyses tRNA(Pro) + L-proline + ATP = L-prolyl-tRNA(Pro) + AMP + diphosphate. Functionally, catalyzes the attachment of proline to tRNA(Pro) in a two-step reaction: proline is first activated by ATP to form Pro-AMP and then transferred to the acceptor end of tRNA(Pro). As ProRS can inadvertently accommodate and process non-cognate amino acids such as alanine and cysteine, to avoid such errors it has two additional distinct editing activities against alanine. One activity is designated as 'pretransfer' editing and involves the tRNA(Pro)-independent hydrolysis of activated Ala-AMP. The other activity is designated 'posttransfer' editing and involves deacylation of mischarged Ala-tRNA(Pro). The misacylated Cys-tRNA(Pro) is not edited by ProRS. The chain is Proline--tRNA ligase from Vibrio parahaemolyticus serotype O3:K6 (strain RIMD 2210633).